A 342-amino-acid polypeptide reads, in one-letter code: Farnesyl pyrophosphate synthase (342 aa).

Isopentenyl diphosphate is bound by residues Lys47, Arg50, and Gln86. 2 residues coordinate Mg(2+): Asp93 and Asp97. Arg102 contributes to the dimethylallyl diphosphate binding site. Isopentenyl diphosphate is bound at residue Arg103. Dimethylallyl diphosphate contacts are provided by Lys190, Thr191, Gln229, Lys246, and Lys255.

It belongs to the FPP/GGPP synthase family. As to quaternary structure, homodimer. Mg(2+) serves as cofactor. In terms of tissue distribution, mostly expressed in roots and seeds, and to a lower extent, in leaves and stems.

It localises to the cytoplasm. It carries out the reaction isopentenyl diphosphate + dimethylallyl diphosphate = (2E)-geranyl diphosphate + diphosphate. It catalyses the reaction isopentenyl diphosphate + (2E)-geranyl diphosphate = (2E,6E)-farnesyl diphosphate + diphosphate. It participates in isoprenoid biosynthesis; farnesyl diphosphate biosynthesis; farnesyl diphosphate from geranyl diphosphate and isopentenyl diphosphate: step 1/1. It functions in the pathway isoprenoid biosynthesis; geranyl diphosphate biosynthesis; geranyl diphosphate from dimethylallyl diphosphate and isopentenyl diphosphate: step 1/1. Stimulated by methyl jasmonate (MeJA). Its function is as follows. Catalyzes the sequential condensation of isopentenyl pyrophosphate with the allylic pyrophosphates, dimethylallyl pyrophosphate, and then with the resultant geranylpyrophosphate to the ultimate product farnesyl pyrophosphate. Component of the triterpene saponins (e.g. ginsenosides or panaxosides) and phytosterols biosynthetic pathways. Promotes the accumulation of ginsenosides. The polypeptide is Farnesyl pyrophosphate synthase (Panax ginseng (Korean ginseng)).